The chain runs to 242 residues: Large ribosomal subunit protein uL3 (242 aa).

The disordered stretch occupies residues glycine 131–histidine 165. The span at histidine 135–arginine 150 shows a compositional bias: polar residues. Glutamine 151 is subject to N5-methylglutamine.

Belongs to the universal ribosomal protein uL3 family. Part of the 50S ribosomal subunit. Forms a cluster with proteins L14 and L19. Post-translationally, methylated by PrmB.

In terms of biological role, one of the primary rRNA binding proteins, it binds directly near the 3'-end of the 23S rRNA, where it nucleates assembly of the 50S subunit. The protein is Large ribosomal subunit protein uL3 of Chelativorans sp. (strain BNC1).